A 766-amino-acid chain; its full sequence is Single-minded homolog 1 (766 aa).

Residues 1 to 53 (MKEKSKNAARTRREKENSEFYELAKLLPLPSAITSQLDKASIIRLTTSYLKMR) form the bHLH domain. 2 PAS domains span residues 77–147 (GREL…QPYH) and 218–288 (PPSA…LVKG). One can recognise a PAC domain in the interval 292–335 (TKYYRFLAKHGGWVWVQSYATIVHNSRSSRPHCIVSVNYVLTDT). The Single-minded C-terminal domain occupies 336–766 (EYKGLQLSLD…GTSVIITNGS (431 aa)). Polar residues predominate over residues 353–365 (AFSYTSSSTPTMT). Disordered stretches follow at residues 353 to 431 (AFSY…SQHD), 528 to 563 (WDED…EPSK), and 642 to 662 (SPRE…SSPN). The short motif at 368–387 (RKGAKSRLSSSKSKSRTSPY) is the Nuclear localization signal element. Residues 373-385 (SRLSSSKSKSRTS) are compositionally biased toward low complexity. A compositionally biased stretch (basic and acidic residues) spans 394-404 (HTERSESDHDS). A compositionally biased stretch (polar residues) spans 649–662 (DNSPTALSRISSPN).

Efficient DNA binding requires dimerization with another bHLH protein. Heterodimer; forms a heterodimer with ARNT, ARNT2.

The protein resides in the nucleus. Its function is as follows. Transcriptional factor that may have pleiotropic effects during embryogenesis and in the adult. The sequence is that of Single-minded homolog 1 (SIM1) from Pan troglodytes (Chimpanzee).